The chain runs to 542 residues: MAKDIKFSADARAAMVRGVDILADTVKVTLGPKGRNVVLEKAFGSPLITNDGVTIAKEIELEDHFENMGAKLVSEVASKTNDIAGDGTTTATVLTQAIVREGLKNVTAGANPIGIRRGIEKATSAAVEELKAIAQPVSGKEAIAQVAAVSSRSEKVGEYISEAMERVGNDGVITIEESRGMETELEVVEGMQFDRGYLSQYMVTDNEKMVADLENPFILITDKKVSNIQEILPLLEEVLKTSRPLLIIADDVDGEALPTLVLNKIRGTFNVVAVKAPGFGDRRKAMLEDIAILTGGTVITEDLGLDLKDATIAALGQAAKVTVDKDSTVIVEGAGSAEAIANRVGLIKSQLETTTSEFDREKLQERLAKLAGGVAVIKVGAATETELKEMKLRIEDALNATRAAVEEGIVSGGGTALVTVIDKVAALELTGDEATGRNIVLRALEEPVRQIAYNAGYEGSVVIDKLKNSPVGTGFNAATGDWVDMIETGIIDPVKVTRSALQNAASVASLILTTEAVVANKPEPAAPAMPGGMDPSMMGGMM.

ATP contacts are provided by residues 29–32 (TLGP), 86–90 (DGTTT), Gly-413, 476–478 (NAA), and Asp-492. The tract at residues 523–542 (EPAAPAMPGGMDPSMMGGMM) is disordered. The span at 526 to 542 (APAMPGGMDPSMMGGMM) shows a compositional bias: low complexity.

The protein belongs to the chaperonin (HSP60) family. As to quaternary structure, forms a cylinder of 14 subunits composed of two heptameric rings stacked back-to-back. Interacts with the co-chaperonin GroES.

The protein localises to the cytoplasm. It catalyses the reaction ATP + H2O + a folded polypeptide = ADP + phosphate + an unfolded polypeptide.. Together with its co-chaperonin GroES, plays an essential role in assisting protein folding. The GroEL-GroES system forms a nano-cage that allows encapsulation of the non-native substrate proteins and provides a physical environment optimized to promote and accelerate protein folding. The protein is Chaperonin GroEL of Streptococcus uberis (strain ATCC BAA-854 / 0140J).